Here is a 130-residue protein sequence, read N- to C-terminus: uncharacterized protein (130 aa).

A signal peptide spans 1 to 20; that stretch reads MFNCLTKLVILVCLKYVAKA.

This is an uncharacterized protein from Saccharomyces cerevisiae (strain ATCC 204508 / S288c) (Baker's yeast).